Here is a 233-residue protein sequence, read N- to C-terminus: PILAAVLQQSSGNVDFDSESPRKPEIQNEIVDLHNSLRRSVNPTASNMLRMEWYPEAADNAERWAYRCIESHSSYESRVIEGIKCGENIYMSPYPMKWTDIIHAWHDEYKDFKYGVGADPPNAVTGHYTQIVWYKSYRIGCAAAYCPSSPYSYFFVCQYCPAGNFIGKTATPYTSGTPCGDCPSDCDNGLCTNPCTRENKFTNCNTMVQQSSCQDNYMKTNCPASCFCQNKII.

Residues proline 1–glycine 12 form the signal peptide. The 129-residue stretch at valine 31–tyrosine 159 folds into the SCP domain. Cystine bridges form between cysteine 68-cysteine 146, cysteine 85-cysteine 160, cysteine 141-cysteine 157, cysteine 179-cysteine 186, cysteine 182-cysteine 191, cysteine 195-cysteine 228, cysteine 204-cysteine 222, and cysteine 213-cysteine 226. The region spanning cysteine 195–cysteine 228 is the ShKT domain.

This sequence belongs to the CRISP family. As to expression, expressed by the venom gland.

The protein resides in the secreted. Its function is as follows. Blocks contraction of smooth muscle elicited by high potassium-induced depolarization, but does not block caffeine-stimulated contraction. May target voltage-gated calcium channels on smooth muscle. This chain is Cysteine-rich venom protein, found in Trimeresurus stejnegeri (Chinese green tree viper).